The chain runs to 347 residues: NADH-quinone oxidoreductase subunit H (347 aa).

The next 9 helical transmembrane spans lie at 13-33, 50-70, 82-102, 115-135, 161-181, 198-218, 263-283, 286-306, and 321-341; these read IIMI…IAYV, PNVV…KFVF, AVFL…WAVV, VGIL…IMGG, IGFV…TDIV, FLDW…ISAL, CALT…IWIL, VPGI…FAMV, and LGWK…AFVL.

The protein belongs to the complex I subunit 1 family. NDH-1 is composed of 14 different subunits. Subunits NuoA, H, J, K, L, M, N constitute the membrane sector of the complex.

It localises to the cell inner membrane. It catalyses the reaction a quinone + NADH + 5 H(+)(in) = a quinol + NAD(+) + 4 H(+)(out). In terms of biological role, NDH-1 shuttles electrons from NADH, via FMN and iron-sulfur (Fe-S) centers, to quinones in the respiratory chain. The immediate electron acceptor for the enzyme in this species is believed to be ubiquinone. Couples the redox reaction to proton translocation (for every two electrons transferred, four hydrogen ions are translocated across the cytoplasmic membrane), and thus conserves the redox energy in a proton gradient. This subunit may bind ubiquinone. In Rhizobium johnstonii (strain DSM 114642 / LMG 32736 / 3841) (Rhizobium leguminosarum bv. viciae), this protein is NADH-quinone oxidoreductase subunit H.